The following is a 105-amino-acid chain: Signal peptidase complex subunit 1 (105 aa).

The Cytoplasmic segment spans residues 1–32 (MDGMIAMLPAPLQKLSSHIDFQGQKVAERTYQ). Residues 33–53 (VILTIAGIIGFLVGFWTQQLS) form a helical membrane-spanning segment. The Lumenal portion of the chain corresponds to 54-56 (YAM). Residues 57–77 (FTVLGASAFTALIILPPWPFL) traverse the membrane as a helical segment. Residues 78–105 (FRKNPIVWHTPAEPQESGDKKKETKKTK) lie on the Cytoplasmic side of the membrane.

It belongs to the SPCS1 family. As to quaternary structure, component of the signal peptidase complex (SPC) composed of a catalytic subunit sec-11 and three accessory subunits spcs-1, spcs-2 and spcs-3. The complex induces a local thinning of the ER membrane which is used to measure the length of the signal peptide (SP) h-region of protein substrates. This ensures the selectivity of the complex towards h-regions shorter than 18-20 amino acids.

The protein resides in the endoplasmic reticulum membrane. Component of the signal peptidase complex (SPC) which catalyzes the cleavage of N-terminal signal sequences from nascent proteins as they are translocated into the lumen of the endoplasmic reticulum. Dispensable for SPC enzymatic activity. This chain is Signal peptidase complex subunit 1, found in Caenorhabditis elegans.